Here is a 535-residue protein sequence, read N- to C-terminus: MVDLSVSPDSLKPVSLTSSLVFLMHLLLLQPGEPSSEVKVLGPEYPILALVGEEVEFPCHLWPQLDAQQMEIRWFRSQTFNVVHLYQEQQELPGRQMPAFRNRTKLVKDDIAYGSVVLQLHSIIPSDKGTYGCRFHSDNFSGEALWELEVAGLGSDPHLSLEGFKEGGIQLRLRSSGWYPKPKVQWRDHQGQCLPPEFEAIVWDAQDLFSLETSVVVRAGALSNVSVSIQNLLLSQKKELVVQIADVFVPGASAWKSAFVATLPLLLVLAALALGVLRKQRRSREKLRKQAEKRQEKLTAELEKLQTELDWRRAEGQAEWRAAQKYAVDVTLDPASAHPSLEVSEDGKSVSSRGAPPGPAPGHPQRFSEQTCALSLERFSAGRHYWEVHVGRRSRWFLGACLAAVPRAGPARLSPAAGYWVLGLWNGCEYFVLAPHRVALTLRVPPRRLGVFLDYEAGELSFFNVSDGSHIFTFHDTFSGALCAYFRPRAHDGGEHPDPLTICPLPVRGTGVPEENDSDTWLQPYEPADPALDWW.

A signal peptide spans 1–34; the sequence is MVDLSVSPDSLKPVSLTSSLVFLMHLLLLQPGEP. Over 35–256 the chain is Extracellular; sequence SSEVKVLGPE…VFVPGASAWK (222 aa). Positions 54-135 constitute an Ig-like V-type domain; it reads EVEFPCHLWP…SDKGTYGCRF (82 aa). A disulfide bridge links cysteine 59 with cysteine 133. N-linked (GlcNAc...) asparagine glycans are attached at residues asparagine 102, asparagine 139, and asparagine 224. The chain crosses the membrane as a helical span at residues 257-277; sequence SAFVATLPLLLVLAALALGVL. Residues 276-315 adopt a coiled-coil conformation; that stretch reads VLRKQRRSREKLRKQAEKRQEKLTAELEKLQTELDWRRAE. Residues 278-535 are Cytoplasmic-facing; that stretch reads RKQRRSREKL…EPADPALDWW (258 aa). One can recognise a B30.2/SPRY domain in the interval 310-509; sequence DWRRAEGQAE…LTICPLPVRG (200 aa). Residues 340 to 367 are disordered; the sequence is SLEVSEDGKSVSSRGAPPGPAPGHPQRF.

Belongs to the immunoglobulin superfamily. BTN/MOG family.

The protein localises to the membrane. In Homo sapiens (Human), this protein is Butyrophilin-like protein 9 (BTNL9).